The primary structure comprises 537 residues: Frizzled-4 (537 aa).

Positions 1 to 36 are cleaved as a signal peptide; it reads MAWRGAGPSVPGAPGGVGLSLGLLLQLLLLLGPARG. Over 37–212 the chain is Extracellular; the sequence is FGDEEERRCD…KCGYDAGLYS (176 aa). The FZ domain occupies 40–161; sequence EEERRCDPIR…NDHNHMCMEG (122 aa). Intrachain disulfides connect Cys-45-Cys-106, Cys-53-Cys-99, Cys-90-Cys-128, Cys-117-Cys-158, Cys-121-Cys-145, Cys-181-Cys-200, Cys-204-Cys-282, and Cys-302-Cys-377. An N-linked (GlcNAc...) asparagine glycan is attached at Asn-59. N-linked (GlcNAc...) asparagine glycosylation occurs at Asn-144. Residues 213-243 traverse the membrane as a helical segment; the sequence is RSAKEFTDIWMAVWASLCFISTAFTVLTFLI. Residues 244-249 lie on the Cytoplasmic side of the membrane; it reads DSSRFS. The helical transmembrane segment at 250 to 275 threads the bilayer; the sequence is YPERPIIFLSMCYNIYSIAYIVRLTV. Residues 276 to 299 lie on the Extracellular side of the membrane; it reads GRERISCDFEEAAEPVLIQEGLKN. The helical transmembrane segment at 300–333 threads the bilayer; the sequence is TGCAIIFLLMYFFGMASSIWWVILTLTWFLAAGL. The Cytoplasmic portion of the chain corresponds to 334–336; it reads KWG. A helical transmembrane segment spans residues 337-365; sequence HEAIEMHSSYFHIAAWAIPAVKTIVILIM. At 366 to 383 the chain is on the extracellular side; that stretch reads RLVDADELTGLCYVGNQN. The helical transmembrane segment at 384 to 418 threads the bilayer; the sequence is LDALTGFVVAPLFTYLVIGTLFIAAGLVALFKIRS. Residues 419–431 lie on the Cytoplasmic side of the membrane; that stretch reads NLQKDGTKTDKLE. A helical membrane pass occupies residues 432–460; sequence RLMVKIGVFSVLYTVPATCVIACYFYEIS. The Extracellular portion of the chain corresponds to 461–473; the sequence is NWALFRYSADDSN. Residues 474-495 traverse the membrane as a helical segment; sequence MAVEMLKIFMSLLVGITSGMWI. Residues 496–537 lie on the Cytoplasmic side of the membrane; that stretch reads WSAKTLHTWQKCSNRLVNSGKVKREKRGNGWVKPGKGSETVV. The Lys-Thr-X-X-X-Trp motif, mediates interaction with the PDZ domain of Dvl family members motif lies at 499–504; that stretch reads KTLHTW. Positions 535-537 match the PDZ-binding motif; it reads TVV.

Belongs to the G-protein coupled receptor Fz/Smo family. In terms of assembly, interacts with MAGI3 and NDP. Component of a complex, at least composed of TSPAN12, FZD4 and norrin (NDP). Interacts (via FZ domain) with TSKU; TSKU competes with WNT2B for binding to FZD4, inhibiting Wnt signaling and repressing peripheral eye development. Interacts with glypican GPC3. Post-translationally, ubiquitinated by ZNRF3, leading to its degradation by the proteasome. In terms of tissue distribution, almost ubiquitous. Largely expressed in adult heart, skeletal muscle, ovary, and fetal kidney. Moderate amounts in adult liver, kidney, pancreas, spleen, and fetal lung, and small amounts in placenta, adult lung, prostate, testis, colon, fetal brain and liver.

Its subcellular location is the cell membrane. Its function is as follows. Receptor for Wnt proteins. Most frizzled receptors are coupled to the beta-catenin (CTNNB1) canonical signaling pathway, which leads to the activation of disheveled proteins, inhibition of GSK-3 kinase, nuclear accumulation of beta-catenin (CTNNB1) and activation of Wnt target genes. Plays a critical role in retinal vascularization by acting as a receptor for Wnt proteins and norrin (NDP). In retina, it can be activated by Wnt protein-binding and also by Wnt-independent signaling via binding of norrin (NDP), promoting in both cases beta-catenin (CTNNB1) accumulation and stimulation of LEF/TCF-mediated transcriptional programs. A second signaling pathway involving PKC and calcium fluxes has been seen for some family members, but it is not yet clear if it represents a distinct pathway or if it can be integrated in the canonical pathway, as PKC seems to be required for Wnt-mediated inactivation of GSK-3 kinase. Both pathways seem to involve interactions with G-proteins. May be involved in transduction and intercellular transmission of polarity information during tissue morphogenesis and/or in differentiated tissues. This is Frizzled-4 (FZD4) from Homo sapiens (Human).